A 5400-amino-acid polypeptide reads, in one-letter code: Midasin (5400 aa).

AAA-ATPase protomer regions lie at residues 345–571 (MVSL…HGLP), 656–986 (LLEK…AIKA), 1050–1308 (SYVK…EKVV), 1347–1652 (SMRR…VNMA), 1769–2023 (VLRV…VLRI), and 2074–2347 (IRQN…MMGP). ATP contacts are provided by residues 360–367 (GPSGSGKS), 674–681 (GETGTGKT), 1079–1086 (GPTSSGKT), 1369–1376 (GDTGGGKT), 1786–1793 (GSPGVGKT), and 2095–2102 (GPSSSGKT). Residues 2435–4569 (IYLSSLGVTD…DGVGAKDVSD (2135 aa)) are linker. 3 coiled-coil regions span residues 2896 to 2916 (LERL…SEID), 3233 to 3253 (AMKI…LELN), and 3896 to 3916 (MEQL…VLKL). Disordered regions lie at residues 4540–4890 (EEDD…SSSN), 4905–4929 (TLTD…TKVN), and 4990–5069 (QVNT…RMDS). Basic and acidic residues predominate over residues 4576-4612 (QLHGTDKKEEEEKEQDDVLGKNKGIEMSDEFDGKEYS). Residues 4613–4631 (VSEDEEEDKEDEGSEDEPL) are compositionally biased toward acidic residues. Composition is skewed to basic and acidic residues over residues 4641 to 4652 (DAEKADEKPWNK) and 4661 to 4687 (MNEK…KDDG). 2 stretches are compositionally biased toward acidic residues: residues 4688-4698 (VETADEPEESN) and 4706-4721 (GNDE…DTDN). Basic and acidic residues predominate over residues 4722 to 4732 (LEEKIQTKEEA). Acidic residues predominate over residues 4740–4750 (VDNEQIDDDME). The span at 4751–4762 (MDKTEEVEKEDA) shows a compositional bias: basic and acidic residues. Acidic residues predominate over residues 4779–4798 (GENDQEETQEPSEENMEAEA). Basic and acidic residues predominate over residues 4799–4810 (EDRCGSPQKEEP). Residues 4811–4822 (GNDLEQEPETEP) are compositionally biased toward acidic residues. Positions 4823 to 4834 (IEGKEVMSEDMM) are enriched in basic and acidic residues. 4 stretches are compositionally biased toward polar residues: residues 4839-4855 (RNDN…NPHG), 4864-4874 (TAPQENLSATD), 4916-4928 (PQNQ…QTKV), and 5030-5040 (SKPSISNSIAE). The Nuclear localization signal motif lies at 5157–5164 (MKKVIPYI). Residues 5186-5387 (QVVIAVDDSR…EALPRTLGDV (202 aa)) enclose the VWFA domain. Residues 5271 to 5291 (VVNLLRNMNEMLENLASTRRQ) adopt a coiled-coil conformation.

Belongs to the midasin family. As to quaternary structure, associates with pre-60S ribosomes in the nucleoplasm. Constitutively and ubiquitously expressed. Mostly observed in the shoot apex and root tip, and, to a lower extent, in mature seeds, seedling (excluding the hypocotyl), roots, stems, leaves and flowers.

The protein resides in the nucleus. Its subcellular location is the nucleolus. The protein localises to the nucleoplasm. Nuclear chaperone required for maturation and nuclear export of pre-60S ribosome subunits. Functions at successive maturation steps to remove ribosomal factors at critical transition points, first driving the exit of early pre-60S particles from the nucleolus and then driving late pre-60S particles from the nucleus. Required for female gametophyte development. Involved in the expression regulation of genes related to plant growth and development. This Arabidopsis thaliana (Mouse-ear cress) protein is Midasin.